Reading from the N-terminus, the 146-residue chain is uncharacterized protein (146 aa).

The region spanning 7–146 is the N-acetyltransferase domain; the sequence is LDINYKTDEL…DGHDVLVWTP (140 aa).

This is an uncharacterized protein from Staphylococcus saprophyticus subsp. saprophyticus (strain ATCC 15305 / DSM 20229 / NCIMB 8711 / NCTC 7292 / S-41).